Consider the following 382-residue polypeptide: Porin-like protein BU359 (382 aa).

The N-terminal stretch at 1–23 (MTNRKSLAMVIPMLLAASNGVNA) is a signal peptide.

It belongs to the Gram-negative porin family. In terms of assembly, homotrimer.

The protein resides in the cell outer membrane. Its function is as follows. Forms pores that allow passive diffusion of small molecules across the membrane. The chain is Porin-like protein BU359 from Buchnera aphidicola subsp. Acyrthosiphon pisum (strain APS) (Acyrthosiphon pisum symbiotic bacterium).